Reading from the N-terminus, the 214-residue chain is A-type ATP synthase subunit D (214 aa).

This sequence belongs to the V-ATPase D subunit family. In terms of assembly, has multiple subunits with at least A(3), B(3), C, D, E, F, H, I and proteolipid K(x).

The protein resides in the cell membrane. Component of the A-type ATP synthase that produces ATP from ADP in the presence of a proton gradient across the membrane. This chain is A-type ATP synthase subunit D, found in Methanosphaera stadtmanae (strain ATCC 43021 / DSM 3091 / JCM 11832 / MCB-3).